Consider the following 54-residue polypeptide: Ovomucoid (54 aa).

Residues Val-4 to Cys-54 form the Kazal-like domain. Disulfide bonds link Cys-6–Cys-36, Cys-14–Cys-33, and Cys-22–Cys-54. Asn-43 is a glycosylation site (N-linked (GlcNAc...) asparagine).

Its subcellular location is the secreted. In Anser anser anser (Western greylag goose), this protein is Ovomucoid.